The primary structure comprises 1040 residues: Vitamin B12-dependent ribonucleotide reductase (1040 aa).

Substrate is bound by residues Ser-169, 213 to 214 (AC), Gly-242, 420 to 424 (NPCSE), and 604 to 608 (PTGTI). An intrachain disulfide couples Cys-214 to Cys-433. Catalysis depends on Asn-420, which acts as the Proton acceptor. The Cysteine radical intermediate role is filled by Cys-422. Glu-424 functions as the Proton acceptor in the catalytic mechanism. Disordered regions lie at residues 909–932 (SAEGAAKTGGNGPDLTTAPAGATA) and 969–988 (GSATNGHSNGQSAGGSSDGA). Polar residues predominate over residues 969–979 (GSATNGHSNGQ).

Belongs to the ribonucleoside diphosphate reductase class-2 family. Adenosylcob(III)alamin is required as a cofactor.

The catalysed reaction is a 2'-deoxyribonucleoside 5'-diphosphate + [thioredoxin]-disulfide + H2O = a ribonucleoside 5'-diphosphate + [thioredoxin]-dithiol. Catalyzes the reduction of ribonucleotides to deoxyribonucleotides. May function to provide a pool of deoxyribonucleotide precursors for DNA repair during oxygen limitation and/or for immediate growth after restoration of oxygen. In Rhodopirellula baltica (strain DSM 10527 / NCIMB 13988 / SH1), this protein is Vitamin B12-dependent ribonucleotide reductase (nrdJ).